A 399-amino-acid chain; its full sequence is Tryptophan synthase beta chain (399 aa).

The residue at position 92 (Lys-92) is an N6-(pyridoxal phosphate)lysine.

Belongs to the TrpB family. As to quaternary structure, tetramer of two alpha and two beta chains. The cofactor is pyridoxal 5'-phosphate.

The enzyme catalyses (1S,2R)-1-C-(indol-3-yl)glycerol 3-phosphate + L-serine = D-glyceraldehyde 3-phosphate + L-tryptophan + H2O. It participates in amino-acid biosynthesis; L-tryptophan biosynthesis; L-tryptophan from chorismate: step 5/5. Its function is as follows. The beta subunit is responsible for the synthesis of L-tryptophan from indole and L-serine. The protein is Tryptophan synthase beta chain of Bordetella bronchiseptica (strain ATCC BAA-588 / NCTC 13252 / RB50) (Alcaligenes bronchisepticus).